We begin with the raw amino-acid sequence, 303 residues long: Probable 5-dehydro-4-deoxyglucarate dehydratase (303 aa).

This sequence belongs to the DapA family.

It catalyses the reaction 5-dehydro-4-deoxy-D-glucarate + H(+) = 2,5-dioxopentanoate + CO2 + H2O. The protein operates within carbohydrate acid metabolism; D-glucarate degradation; 2,5-dioxopentanoate from D-glucarate: step 2/2. This is Probable 5-dehydro-4-deoxyglucarate dehydratase from Polaromonas naphthalenivorans (strain CJ2).